The following is a 631-amino-acid chain: Phosphomethylpyrimidine synthase (631 aa).

Substrate-binding positions include N239, M268, Y297, H333, 353–355 (SRG), 394–397 (DGLR), and E433. H437 serves as a coordination point for Zn(2+). Y460 lines the substrate pocket. H501 is a Zn(2+) binding site. [4Fe-4S] cluster is bound by residues C581, C584, and C589.

It belongs to the ThiC family. As to quaternary structure, homodimer. The cofactor is [4Fe-4S] cluster.

The catalysed reaction is 5-amino-1-(5-phospho-beta-D-ribosyl)imidazole + S-adenosyl-L-methionine = 4-amino-2-methyl-5-(phosphooxymethyl)pyrimidine + CO + 5'-deoxyadenosine + formate + L-methionine + 3 H(+). It participates in cofactor biosynthesis; thiamine diphosphate biosynthesis. Functionally, catalyzes the synthesis of the hydroxymethylpyrimidine phosphate (HMP-P) moiety of thiamine from aminoimidazole ribotide (AIR) in a radical S-adenosyl-L-methionine (SAM)-dependent reaction. This Citrobacter koseri (strain ATCC BAA-895 / CDC 4225-83 / SGSC4696) protein is Phosphomethylpyrimidine synthase.